Consider the following 899-residue polypeptide: CNK3/IPCEF1 fusion protein (899 aa).

Positions 7 to 72 (WSPKQVVDWT…LEAVDLLCAL (66 aa)) constitute an SAM domain. Residues 80 to 174 (NMKNLVLKLR…TTVQKDCFVA (95 aa)) enclose the CRIC domain. Residues 211-293 (EVHLPNIKPG…GVVLLLKKRP (83 aa)) enclose the PDZ domain. 2 disordered regions span residues 309–334 (WKPP…DTSL) and 347–390 (PPPP…FLDQ). The region spanning 332–457 (TSLKKEKSAI…ARPRGHGRKA (126 aa)) is the DUF1170 domain. S383 carries the phosphoserine modification. One can recognise a PH domain in the interval 503–602 (HADCQGWLYK…WLNKLGSAVI (100 aa)). Disordered stretches follow at residues 605 to 687 (ESTT…PDTV), 735 to 770 (LSSD…TKVS), and 868 to 899 (QQQR…ENSI). Over residues 613-624 (CYSESEQEDPEI) the composition is skewed to acidic residues. Over residues 634–662 (ASQTQSLTAQQASSSSPSLSGTSYSFSSL) the composition is skewed to low complexity. Polar residues predominate over residues 663–676 (ENTVKTPSSFPSSL). The segment covering 735-745 (LSSDDTSSLSS) has biased composition (low complexity). Positions 761 to 770 (IMDKEETKVS) are enriched in basic and acidic residues. A required for interaction with CYTH2 region spans residues 851 to 899 (KYREWKVMNTLLIQDIYQQQRASPAPDDTDDTPQELKKSPSSPSVENSI). The residue at position 873 (S873) is a Phosphoserine. The segment covering 889–899 (SPSSPSVENSI) has biased composition (polar residues).

Belongs to the CNKSR family.

In terms of biological role, required for hepatocyte growth factor (HGF)-dependent activation of Arf6 and HGF-stimulated cell migration. The chain is CNK3/IPCEF1 fusion protein (CNK3/IPCEF1) from Homo sapiens (Human).